Here is a 617-residue protein sequence, read N- to C-terminus: Zinc metalloproteinase nas-36 (617 aa).

The signal sequence occupies residues 1–22; sequence MRLCHSIILFNSLISISICSKA. Positions 23-126 are excised as a propeptide; that stretch reads DDPALLVASE…SKDKTKRLRR (104 aa). A Peptidase M12A domain is found at 127-322; the sequence is SFVSDKTATW…VATINTAYCK (196 aa). Disulfide bonds link C169–C321, C192–C211, C325–C346, C348–C357, C368–C397, C425–C445, C519–C550, C523–C555, and C535–C540. N174 carries an N-linked (GlcNAc...) asparagine glycan. H219 is a binding site for Zn(2+). E220 is a catalytic residue. H223 and H229 together coordinate Zn(2+). Residues 317-358 enclose the EGF-like domain; sequence NTAYCKDECKSEKTKCENGGYMRPSKCSECLCPDGLGGEKCE. In terms of domain architecture, CUB spans 368 to 482; that stretch reads CGGIIKLTEE…IGFKIQAKST (115 aa). Residues 507–556 enclose the TSP type-1 domain; the sequence is PNVWADWGEWSMCSRTCGGCGIRSRVRSCRSKKCEGRRQEFGTCNLKACP.

Requires Zn(2+) as cofactor. As to expression, expressed in hypodermal cells. Also detected in the hypodermal seam cells in L4 larvae and young adults. In old adult hermaphrodites, it localizes to the vulva (at protein level).

Its subcellular location is the secreted. Metalloprotease. Involved in molting, a process during larval stages in which a new cuticle is formed and the old cuticle is shed. The protein is Zinc metalloproteinase nas-36 (nas-36) of Caenorhabditis elegans.